Consider the following 121-residue polypeptide: Large ribosomal subunit protein uL14 (121 aa).

Belongs to the universal ribosomal protein uL14 family. Part of the 50S ribosomal subunit. Forms a cluster with proteins L3 and L19. In the 70S ribosome, L14 and L19 interact and together make contacts with the 16S rRNA in bridges B5 and B8.

Its function is as follows. Binds to 23S rRNA. Forms part of two intersubunit bridges in the 70S ribosome. In Phocaeicola vulgatus (strain ATCC 8482 / DSM 1447 / JCM 5826 / CCUG 4940 / NBRC 14291 / NCTC 11154) (Bacteroides vulgatus), this protein is Large ribosomal subunit protein uL14.